The following is a 113-amino-acid chain: Ribosome-binding factor A (113 aa).

The protein belongs to the RbfA family. Monomer. Binds 30S ribosomal subunits, but not 50S ribosomal subunits or 70S ribosomes.

It localises to the cytoplasm. Functionally, one of several proteins that assist in the late maturation steps of the functional core of the 30S ribosomal subunit. Associates with free 30S ribosomal subunits (but not with 30S subunits that are part of 70S ribosomes or polysomes). Required for efficient processing of 16S rRNA. May interact with the 5'-terminal helix region of 16S rRNA. This Lactococcus lactis subsp. cremoris (Streptococcus cremoris) protein is Ribosome-binding factor A.